The primary structure comprises 97 residues: Small cell adhesion glycoprotein (97 aa).

Residues 1-36 lie on the Extracellular side of the membrane; that stretch reads MNNLPATPSPEELMTTPVFQAPETMSPQAEEASTAL. O-linked (GalNAc...) threonine glycosylation is present at Thr-7. O-linked (GalNAc...) serine glycosylation is present at Ser-9. O-linked (GalNAc...) threonine glycosylation is found at Thr-15, Thr-16, and Thr-24. The O-linked (GalNAc...) serine glycan is linked to Ser-26. The chain crosses the membrane as a helical; Signal-anchor for type III membrane protein span at residues 37-57; sequence IAVVITVVFLTLLSVVTLIFF. The Cytoplasmic portion of the chain corresponds to 58-97; it reads YLYKNKGSYVTYEPAEGEPSAILQMETDSAKGKEKEEYFI.

The protein belongs to the SMAGP family. Post-translationally, O-glycosylated. The O-glycan is modified with sialic acid residues. Detected in brain (at protein level). Highly expressed in kidney and placenta. Detected in skin, breast, heart, lung, liver, prostate, spleen, small intestine, colon and stomach.

It localises to the cell membrane. Its subcellular location is the cytoplasmic vesicle membrane. In terms of biological role, may play a role in epithelial cell-cell contacts. May play a role in tumor invasiveness and metastasis formation. In Rattus norvegicus (Rat), this protein is Small cell adhesion glycoprotein (Smagp).